We begin with the raw amino-acid sequence, 428 residues long: 5'-nucleotidase domain-containing protein 4 (428 aa).

Asp22 functions as the Nucleophile in the catalytic mechanism. 3 residues coordinate Mg(2+): Asp22, Asp24, and Asp317. Residue Asp24 is the Proton donor of the active site.

It belongs to the 5'(3')-deoxyribonucleotidase family.

The chain is 5'-nucleotidase domain-containing protein 4 (NT5DC4) from Homo sapiens (Human).